The following is a 257-amino-acid chain: uncharacterized protein (257 aa).

Residues serine 122 and histidine 236 each act as charge relay system in the active site.

This sequence belongs to the peptidase S9B family.

This is an uncharacterized protein from Bacillus subtilis (strain 168).